The sequence spans 122 residues: Acidic phospholipase A2 BlatPLA2 (122 aa).

7 disulfide bridges follow: cysteine 26–cysteine 115, cysteine 28–cysteine 44, cysteine 43–cysteine 95, cysteine 49–cysteine 122, cysteine 50–cysteine 88, cysteine 57–cysteine 81, and cysteine 75–cysteine 86. Positions 27, 29, and 31 each coordinate Ca(2+). The active site involves histidine 47. Residue aspartate 48 participates in Ca(2+) binding. Aspartate 89 is a catalytic residue.

Belongs to the phospholipase A2 family. Group II subfamily. D49 sub-subfamily. As to quaternary structure, monomer. Ca(2+) serves as cofactor. In terms of tissue distribution, expressed by the venom gland.

Its subcellular location is the secreted. It catalyses the reaction a 1,2-diacyl-sn-glycero-3-phosphocholine + H2O = a 1-acyl-sn-glycero-3-phosphocholine + a fatty acid + H(+). Functionally, acidic phospholipase A2 (PLA2) that only causes a mild edema, when subcutaneously injected in the mice foot. PLA2 catalyzes the calcium-dependent hydrolysis of the 2-acyl groups in 3-sn-phosphoglycerides. The protein is Acidic phospholipase A2 BlatPLA2 of Bothriechis lateralis (Side-striped palm pitviper).